We begin with the raw amino-acid sequence, 282 residues long: Nickel/cobalt efflux system RcnA (282 aa).

The Periplasmic segment spans residues 1 to 12 (MTEFTTLLQQGN). The helical transmembrane segment at 13–33 (AWFFIPSAILLGALHGLEPGH) threads the bilayer. The Cytoplasmic segment spans residues 34–56 (SKTMMAAFIIAIKGTIKQAVMLG). Residues 57-77 (LAATISHTAVVWLIAFGGMVI) traverse the membrane as a helical segment. At 78–86 (SKRFTAQSA) the chain is on the periplasmic side. Residues 87–107 (EPWLQLISAVIIIGTAFWMFW) traverse the membrane as a helical segment. The Cytoplasmic segment spans residues 108–182 (RTWRGERNWL…FDGREVINWQ (75 aa)). Positions 127 to 161 (HHHHHHDHEHHQDHEHHHDQGHHHHHEHGEYQDAH) are disordered. Positions 135-144 (EHHQDHEHHH) are enriched in basic and acidic residues. The helical transmembrane segment at 183 to 203 (ILLFGLTGGFIPCPAAITVLL) threads the bilayer. Over 204 to 217 (ICIQLKALTLGATL) the chain is Periplasmic. A helical membrane pass occupies residues 218–238 (VVSFSIGLALTLVTVGVGAAI). Residues 239-259 (SVQQVAKRWSGFNTLAKRAPY) lie on the Cytoplasmic side of the membrane. The helical transmembrane segment at 260–280 (FSSLLIGLVGVYMGVHGFMGI) threads the bilayer. The Periplasmic segment spans residues 281-282 (MR).

This sequence belongs to the NiCoT transporter (TC 2.A.52) family. RcnA subfamily.

The protein resides in the cell inner membrane. Its function is as follows. Efflux system for nickel and cobalt. In Shigella flexneri serotype 5b (strain 8401), this protein is Nickel/cobalt efflux system RcnA (rcnA).